Reading from the N-terminus, the 223-residue chain is Imidazoleglycerol-phosphate dehydratase (223 aa).

This sequence belongs to the imidazoleglycerol-phosphate dehydratase family.

The catalysed reaction is D-erythro-1-(imidazol-4-yl)glycerol 3-phosphate = 3-(imidazol-4-yl)-2-oxopropyl phosphate + H2O. It functions in the pathway amino-acid biosynthesis; L-histidine biosynthesis; L-histidine from 5-phospho-alpha-D-ribose 1-diphosphate: step 6/9. In Candida albicans (Yeast), this protein is Imidazoleglycerol-phosphate dehydratase (HIS3).